The following is a 317-amino-acid chain: Pinoresinol reductase 2 (317 aa).

NADP(+)-binding residues include threonine 18, serine 20, leucine 21, arginine 41, lysine 50, serine 90, glycine 91, arginine 95, asparagine 98, and serine 121. Methionine 125 lines the (-)-pinoresinol pocket. NADP(+) contacts are provided by lysine 144 and phenylalanine 166. Residue lysine 144 is the Proton acceptor of the active site. Glycine 178 is a binding site for (-)-pinoresinol.

It belongs to the NmrA-type oxidoreductase family. Isoflavone reductase subfamily. In terms of assembly, forms homodimers. As to expression, expressed in roots. Detected in stems.

The enzyme catalyses (-)-lariciresinol + NADP(+) = (-)-pinoresinol + NADPH + H(+). Its function is as follows. Reductase involved in lignan biosynthesis. Unlike conventional pinoresinol reductases that can reduce both pinoresinol and lariciresinol, PRR2 shows a strict substrate selectivity for (-)-pinoresinol. No activity with (+)-pinoresinol or lariciresinol. Abstracts the 4R-hydride from the NADPH cofactor during catalysis. The sequence is that of Pinoresinol reductase 2 from Arabidopsis thaliana (Mouse-ear cress).